A 614-amino-acid chain; its full sequence is Zinc metalloproteinase-disintegrin-like protein H4 subunit A (614 aa).

The first 20 residues, 1–20 (MIQPLLVVTCLVVFPYQVSS), serve as a signal peptide directing secretion. Residues 21 to 193 (IILESGNVND…RKASQLVATS (173 aa)) constitute a propeptide that is removed on maturation. Residue E194 is modified to Pyrrolidone carboxylic acid (Glu). Residues 201 to 397 (KYIELVIVVD…IKSKCIDNKP (197 aa)) enclose the Peptidase M12B domain. N-linked (GlcNAc...) asparagine glycosylation is present at N220. Intrachain disulfides connect C312–C392, C352–C376, C354–C359, C408–C437, C419–C432, C421–C427, C431–C454, C445–C451, C450–C476, C463–C483, C470–C502, C495–C507, C514–C564, C529–C575, C542–C552, C559–C601, and C595–C607. Residue H337 coordinates Zn(2+). Residues 337–348 (HELGHNLGMDHD) carry the Metal-binding motif. E338 acts as the Proton acceptor in catalysis. 2 residues coordinate Zn(2+): H341 and H347. One can recognise a Disintegrin domain in the interval 405 to 491 (PAFCGNYFVE…ECPTDVLQRN (87 aa)). Ca(2+)-binding residues include N410, F412, E414, E417, and D420. A glycan (N-linked (GlcNAc...) asparagine) is linked at N433. The short motif at 469–471 (ECD) is the D/ECD-tripeptide element. Residues D471 and D486 each contribute to the Ca(2+) site.

The protein belongs to the venom metalloproteinase (M12B) family. P-III subfamily. As to quaternary structure, homodimer; disulfide-linked. Heterodimer of A and B subunits; disulfide-linked. Zn(2+) is required as a cofactor. N-glycosylated. Post-translationally, the N-terminus is blocked. As to expression, expressed by the venom gland (at protein level). Expressed by the venom gland.

The protein resides in the secreted. The proteolytic activity of the heterodimer of A and B subunits requires Zn(2+) and Ca(2+) ions. Functionally, heterodimer (A and B subunits): Zinc metalloprotease that has fibrinogenolytic and hemorrhagic activities. Cleaves insulin B chain preferably at '40-Tyr-|-Leu-41' bond, but also at '28-Gln-|-His-29' and '34-His-|-Leu-35' bonds. Hydrolyzes effectively isolated extracellular matrix (ECM) bovine fibronectin, and only slightly, basal membrane (BM) proteins human collagen IV and murine laminin, in vitro. Cleaves nidogen-1 (at '350-Ser-|-Phe-351' and '380-Tyr-|-Asn-381' bonds), but not laminin, in a solubilized BM preparation. Hydrolyzes plasma proteins involved in blood coagulation in vitro. It slightly shortens prothrombin time and significantly prolongs thrombin time. Has potent alpha-fibrinogenase activity cleaving human fibrinogen alpha chain at '441-Glu-|-Leu-442' and '539-Glu-|-Phe-540' bonds, and to a lesser extent, beta chain at '52-Lys-|-Arg-53' and '48-Pro-|-Leu-49' bonds, but does not cleave gamma chain. Hydrolyzes bovine prothrombin at '200-Ser-|-Gly-201' bond, but does not activate it, however, it cleaves fragment 1 and prethrombin 1 from it. Hydrolyzes bovine factor X heavy chain, but the cleavage does not produce an activated factor Xa heavy chain. No hydrolysis or activation of plasminogen. The ability to degrade some of the ECM, BM and plasma proteins is likely the main contributor to its hemorrhagic activity. Inhibits platelet aggregation induced by collagen in vitro. Its binding to glycosaminoglycans (GAGs) may assist in concentrating it in the proximity of blood vessel walls enabling in vivo degradation of BM protein components. Cytotoxic to cultured HeLa cancer cells in a concentration- and time-dependent manner. In the solubilized BM preparation (Matrigel), it induces morphological changes in the HeLa cells and inhibits their adhesion, however, the viability of the cells is not reduced. This is Zinc metalloproteinase-disintegrin-like protein H4 subunit A from Vipera ammodytes ammodytes (Western sand viper).